The primary structure comprises 189 residues: dCTP deaminase, dUMP-forming (189 aa).

DCTP-binding positions include 101–106 (KSSLGR), Asp-119, 127–129 (TLE), Gln-148, Tyr-162, and Gln-174. The Proton donor/acceptor role is filled by Glu-129. Residues 166-189 (AVGSKYQGQRGPTPSRSHLNFIKS) form a disordered region. The span at 171–189 (YQGQRGPTPSRSHLNFIKS) shows a compositional bias: polar residues.

It belongs to the dCTP deaminase family. Homotrimer.

The catalysed reaction is dCTP + 2 H2O = dUMP + NH4(+) + diphosphate. It functions in the pathway pyrimidine metabolism; dUMP biosynthesis; dUMP from dCTP: step 1/1. In terms of biological role, bifunctional enzyme that catalyzes both the deamination of dCTP to dUTP and the hydrolysis of dUTP to dUMP without releasing the toxic dUTP intermediate. This Mycolicibacterium smegmatis (strain ATCC 700084 / mc(2)155) (Mycobacterium smegmatis) protein is dCTP deaminase, dUMP-forming.